The sequence spans 77 residues: Chassatide C2 (77 aa).

An N-terminal signal peptide occupies residues 1 to 24 (MAKFANYLMLFLLVASLVMLEAQS). Positions 25 to 44 (SDTIKVPDLGKRLLMNRDPN) are cleaved as a propeptide — removed in mature form. The segment at residues 45 to 75 (GIPCAESCVWIPCTITALMGCSCKNNVCYNN) is a cross-link (cyclopeptide (Gly-Asn)). Disulfide bonds link cysteine 48–cysteine 65, cysteine 52–cysteine 67, and cysteine 57–cysteine 72. Residue methionine 63 is modified to Methionine sulfoxide; in form chassatide chaC2A. A propeptide spans 76–77 (EL) (removed in mature form).

The protein belongs to the cyclotide family. Bracelet subfamily. In terms of processing, this is a cyclic peptide. In terms of tissue distribution, expressed in fruit, pedicel and stem but not in leaf and root (at protein level).

Chassatide C2: Probably participates in a plant defense mechanism. Has no activity against bacteria up to a concentration of 80 uM. Has cytotoxic but no hemolytic activity. In terms of biological role, chassatide C2A: Probably participates in a plant defense mechanism. Has no activity against bacteria up to a concentration of 80 uM. Has no cytotoxic and no hemolytic activity. This chain is Chassatide C2, found in Chassalia chartacea (Chassalia curviflora).